A 1617-amino-acid polypeptide reads, in one-letter code: Mitogen-activated protein kinase kinae kinase bck1 (1617 aa).

Disordered regions lie at residues 1–73 (MDGQ…SQLQ), 167–199 (GPVHHLYESSGGDGSAYKRDGTVPPTPSARTMP), 211–253 (SVAS…GGMS), 345–399 (RQIH…SPNL), 455–555 (DHRR…SSSY), 568–633 (KRSK…LRGK), 739–820 (GVPL…ISPE), 832–1144 (EHKR…RGDI), and 1164–1277 (DIDL…EILR). Low complexity predominate over residues 19 to 28 (TQPSQSHMLS). Residues 44–60 (VMPPPPPGPPPGPPPGP) show a composition bias toward pro residues. Positions 220-248 (TAQNHQSQTGQTNEPTKSPSHRQNNSNTL) are enriched in polar residues. Over residues 482–504 (KSGSPATQHATLNQGLSSSSTGD) the composition is skewed to polar residues. The segment covering 524–533 (RYYESRKGQE) has biased composition (basic and acidic residues). 2 stretches are compositionally biased toward polar residues: residues 535 to 555 (IRPSPQEMCSRQWTGETSSSY) and 586 to 596 (ESPTSPVNLRQ). 2 stretches are compositionally biased toward basic and acidic residues: residues 832 to 841 (EHKREVERKQ) and 871 to 885 (FDERRVSPYEDKKAD). Composition is skewed to polar residues over residues 897–907 (PQESYTLTRIN) and 956–980 (GGKQTNFGSFGSPTQGNTKSAPQSS). Basic and acidic residues-rich tracts occupy residues 1128–1140 (EDERPPPRRDSFA) and 1189–1198 (PENDLHKKEN). 2 stretches are compositionally biased toward polar residues: residues 1199-1208 (QPSSSYTGEM) and 1257-1272 (NQASRSRSIHTGNQKS). A Protein kinase domain is found at 1323–1596 (IIRGQLIGKG…QTLLTRHPFC (274 aa)). ATP contacts are provided by residues 1329-1337 (IGKGTYGRV) and K1352. The Proton acceptor role is filled by D1453.

Belongs to the protein kinase superfamily. STE Ser/Thr protein kinase family. MAP kinase kinase subfamily.

The enzyme catalyses L-seryl-[protein] + ATP = O-phospho-L-seryl-[protein] + ADP + H(+). It carries out the reaction L-threonyl-[protein] + ATP = O-phospho-L-threonyl-[protein] + ADP + H(+). Functionally, mitogen-activated kinase kinase kinase (MAPKKK), part of the cell wall integrity (CWI) signaling pathway composed by three protein kinases bck1, mkk2 and mpkA and responsible for the maintaining of cell-wall integrity balance. The CWI pathway also regulates the oxidative stress response, as well as the production of some secondary metabolites including pyomelanin. The sequence is that of Mitogen-activated protein kinase kinae kinase bck1 from Aspergillus fumigatus (strain CBS 144.89 / FGSC A1163 / CEA10) (Neosartorya fumigata).